Consider the following 156-residue polypeptide: SsrA-binding protein (156 aa).

Belongs to the SmpB family.

It is found in the cytoplasm. Functionally, required for rescue of stalled ribosomes mediated by trans-translation. Binds to transfer-messenger RNA (tmRNA), required for stable association of tmRNA with ribosomes. tmRNA and SmpB together mimic tRNA shape, replacing the anticodon stem-loop with SmpB. tmRNA is encoded by the ssrA gene; the 2 termini fold to resemble tRNA(Ala) and it encodes a 'tag peptide', a short internal open reading frame. During trans-translation Ala-aminoacylated tmRNA acts like a tRNA, entering the A-site of stalled ribosomes, displacing the stalled mRNA. The ribosome then switches to translate the ORF on the tmRNA; the nascent peptide is terminated with the 'tag peptide' encoded by the tmRNA and targeted for degradation. The ribosome is freed to recommence translation, which seems to be the essential function of trans-translation. The polypeptide is SsrA-binding protein (Paracoccus denitrificans (strain Pd 1222)).